Consider the following 195-residue polypeptide: Probable GTP-binding protein EngB (195 aa).

Residues 22 to 195 (GYPEIALVGR…WKWIEDRMGE (174 aa)) enclose the EngB-type G domain. Residues 30–37 (GRSNVGKS), 57–61 (GKTQT), 75–78 (DVPG), 142–145 (TKSD), and 173–176 (MFSA) contribute to the GTP site. Residues serine 37 and threonine 59 each contribute to the Mg(2+) site.

The protein belongs to the TRAFAC class TrmE-Era-EngA-EngB-Septin-like GTPase superfamily. EngB GTPase family. It depends on Mg(2+) as a cofactor.

Necessary for normal cell division and for the maintenance of normal septation. The polypeptide is Probable GTP-binding protein EngB (Pediococcus pentosaceus (strain ATCC 25745 / CCUG 21536 / LMG 10740 / 183-1w)).